A 391-amino-acid polypeptide reads, in one-letter code: MSRFHFFILVLLVSISGFSQGMLLPVISIIFETNGESAAINGLHATGLYIGVLLASPFMEAPLRKLGFKPLIVMGGSIVILSLFGFIWLQSVWVWFLLRLFIGIGDHMLHFSTQTWVTSMSSKQNRGRNLSIYGLSFGLGFAAGPFMVPLVKLSPSLPFIVSGCISLFAWLFVFFLQNAYPETSPHETKSDNSFRRFYQAMLFGWVAFMPTFGYGFLETALNGSFPVYALRLGISVDAVAIILPAFAIGSIIFQFPLGILSDKYGRRNVLLVILLTGALCFFIAGVFPSPYVIGGCFFIAGMAVGSTFTLGISYMTDLLPPHLLPAGNLLCGITFSLGSILGPVAGGWYMQTFESANLFYFITLTLSSVWLALVLGKPKSWSPAETYSSSS.

12 helical membrane passes run 7 to 27 (FILVLLVSISGFSQGMLLPVI), 39 to 59 (AINGLHATGLYIGVLLASPFM), 66 to 88 (LGFKPLIVMGGSIVILSLFGFIW), 92 to 111 (VWVWFLLRLFIGIGDHMLHF), 131 to 151 (SIYGLSFGLGFAAGPFMVPLV), 156 to 176 (SLPFIVSGCISLFAWLFVFFL), 197 to 217 (FYQAMLFGWVAFMPTFGYGFL), 239 to 259 (VAIILPAFAIGSIIFQFPLGI), 269 to 289 (VLLVILLTGALCFFIAGVFPS), 292 to 312 (VIGGCFFIAGMAVGSTFTLGI), 329 to 349 (LLCGITFSLGSILGPVAGGWY), and 356 to 376 (ANLFYFITLTLSSVWLALVLG).

It belongs to the major facilitator superfamily.

It localises to the cell membrane. This is an uncharacterized protein from Bacillus subtilis (strain 168).